The following is a 141-amino-acid chain: HTH-type transcriptional repressor NsrR (141 aa).

An HTH rrf2-type domain is found at 2 to 129 (QLTSFTDYGL…DNYTLADLVE (128 aa)). The H-T-H motif DNA-binding region spans 28–51 (ISEVTEVYGVSRNHMVKIINQLSR). Cysteine 91, cysteine 96, and cysteine 102 together coordinate [2Fe-2S] cluster.

Requires [2Fe-2S] cluster as cofactor.

Functionally, nitric oxide-sensitive repressor of genes involved in protecting the cell against nitrosative stress. May require iron for activity. In Salmonella choleraesuis (strain SC-B67), this protein is HTH-type transcriptional repressor NsrR.